The sequence spans 452 residues: uncharacterized protein (452 aa).

A run of 14 helical transmembrane segments spans residues 8-28 (AVFL…SSMI), 39-59 (FHLS…ASAV), 77-97 (FLFG…APTF), 100-122 (LLVM…VGLI), 134-156 (LAVL…GFLI), 161-183 (WPAI…LYMF), 203-222 (LGIV…LLSF), 226-243 (PHAV…AFVW), 266-286 (AVYV…FGLP), 302-322 (LFML…GKWI), 330-350 (PIFA…IFFI), 359-379 (LILS…QAAM), 393-415 (GLFQ…ILFG), and 425-447 (MMGI…FAAL).

Belongs to the major facilitator superfamily.

The protein localises to the cell membrane. This is an uncharacterized protein from Bacillus subtilis (strain 168).